Here is a 411-residue protein sequence, read N- to C-terminus: Snake venom metalloproteinase ACLF (411 aa).

An N-terminal signal peptide occupies residues 1–20 (MIQVLLVTLCLAAFPYQGSS). A propeptide spanning residues 21-189 (IILESGNVND…KKAFQLNLTP (169 aa)) is cleaved from the precursor. The Peptidase M12B domain maps to 197 to 393 (RYVELVIVAD…NNPQCILNKP (197 aa)). Glutamate 200 and aspartate 284 together coordinate Ca(2+). Disulfide bonds link cysteine 308/cysteine 388, cysteine 348/cysteine 372, and cysteine 350/cysteine 355. Histidine 333 is a binding site for Zn(2+). Residue glutamate 334 is part of the active site. Histidine 337 and histidine 343 together coordinate Zn(2+). Residues cysteine 388, asparagine 391, valine 403, asparagine 406, leucine 408, and glutamate 410 each coordinate Ca(2+).

The protein belongs to the venom metalloproteinase (M12B) family. P-I subfamily. As to quaternary structure, monomer. Zn(2+) is required as a cofactor. In terms of tissue distribution, expressed by the venom gland.

It is found in the secreted. With respect to regulation, inhibited by EDTA and 1,10-phenanthroline, but not by PMSF. Its function is as follows. Snake venom zinc metalloprotease that has fibrinolytic activity. The recombinant enzyme cleaves both alpha- and beta-chains of fibrinogen, but not the gamma-chain. The recombinant protein does not produce hemorrhage in mice. Cleaves the peptide substrate Abz-LVEALYQ-EDDnp at the Ala-Leu bond in vitro. The protein is Snake venom metalloproteinase ACLF (ACLPREF) of Agkistrodon contortrix laticinctus (Broad-banded copperhead).